We begin with the raw amino-acid sequence, 306 residues long: Ribonuclease Z (306 aa).

Positions 63, 65, 67, 68, 141, 211, and 269 each coordinate Zn(2+). The Proton acceptor role is filled by Asp67.

It belongs to the RNase Z family. Homodimer. Requires Zn(2+) as cofactor.

The enzyme catalyses Endonucleolytic cleavage of RNA, removing extra 3' nucleotides from tRNA precursor, generating 3' termini of tRNAs. A 3'-hydroxy group is left at the tRNA terminus and a 5'-phosphoryl group is left at the trailer molecule.. Functionally, zinc phosphodiesterase, which displays some tRNA 3'-processing endonuclease activity. Probably involved in tRNA maturation, by removing a 3'-trailer from precursor tRNA. This is Ribonuclease Z from Staphylococcus saprophyticus subsp. saprophyticus (strain ATCC 15305 / DSM 20229 / NCIMB 8711 / NCTC 7292 / S-41).